The primary structure comprises 156 residues: Protein OXIDATIVE STRESS 3 LIKE 3 (156 aa).

Positions 1 to 67 (MHYQEQMESL…GLSKHYKGKS (67 aa)) are disordered. Over residues 13–26 (GEERRRGNYTRDVD) the composition is skewed to basic and acidic residues.

The protein resides in the nucleus. Functionally, promotes slightly the tolerance to oxidizing chemicals (e.g. diamide). The chain is Protein OXIDATIVE STRESS 3 LIKE 3 from Arabidopsis thaliana (Mouse-ear cress).